The following is a 314-amino-acid chain: MEWSEVEVHTTNEAVEPVANVLTEFGAAGVSIEDVADFLREREDKFGEIYALKREDYPEDGVIIKAYFLKTAEFVEQIPEIEKTLKNLTTFDIPLGKFQFVVNDVDDEEWATAWKKYYHPVQITDRITIVPSWESYTPSANEIIIELDPGMAFGTGTHPTTQLCIRALSDYLQPNDEIIDVGTGSGVLSIASAKLGAKSVLATDLDEIATRAAEENIILNKTEHIITVKQNNLLQDINKTNVDIVVANILAEVILLFPEDVYRALKPGGIFIASGIIEDKAKVVEEALKNAGLVIEKIEQQGDWVAIISKRGVE.

4 residues coordinate S-adenosyl-L-methionine: Thr-161, Gly-182, Asp-204, and Asn-248.

The protein belongs to the methyltransferase superfamily. PrmA family.

It is found in the cytoplasm. It carries out the reaction L-lysyl-[protein] + 3 S-adenosyl-L-methionine = N(6),N(6),N(6)-trimethyl-L-lysyl-[protein] + 3 S-adenosyl-L-homocysteine + 3 H(+). Its function is as follows. Methylates ribosomal protein L11. The protein is Ribosomal protein L11 methyltransferase of Listeria welshimeri serovar 6b (strain ATCC 35897 / DSM 20650 / CCUG 15529 / CIP 8149 / NCTC 11857 / SLCC 5334 / V8).